Reading from the N-terminus, the 218-residue chain is Protein-lysine N-methyltransferase M142.8 (218 aa).

This sequence belongs to the class I-like SAM-binding methyltransferase superfamily. EFM5 family.

Its subcellular location is the cytoplasm. Its function is as follows. S-adenosyl-L-methionine-dependent protein-lysine N-methyltransferase that methylates elongation factor 1-alpha. The chain is Protein-lysine N-methyltransferase M142.8 from Caenorhabditis elegans.